The chain runs to 283 residues: uncharacterized protein (283 aa).

This is an uncharacterized protein from Halobacterium salinarum (strain ATCC 700922 / JCM 11081 / NRC-1) (Halobacterium halobium).